The sequence spans 188 residues: Aspartic protease inhibitor 11 (188 aa).

Residue Asn19 is glycosylated (N-linked (GlcNAc...) asparagine). Intrachain disulfides connect Cys48/Cys93, Cys142/Cys159, and Cys150/Cys153.

This sequence belongs to the protease inhibitor I3 (leguminous Kunitz-type inhibitor) family.

It localises to the vacuole. Its function is as follows. Inhibitor of cathepsin D (aspartic protease) and trypsin (serine protease). May protect the plant by inhibiting proteases of invading organisms. The sequence is that of Aspartic protease inhibitor 11 from Solanum tuberosum (Potato).